Consider the following 361-residue polypeptide: MERLYYLNHAPIDFHFAQTPRDFVVEEIPLYPFSGAGEHLVLKIRKRNLSTFELVDILSSHLGIKSREIGYAGLKDKSALTLQHLSIPAKFGDKLEAFDHPEVKILEQVRHENKIRIGHLKGNRFFIRLKKLSPLNSLKIQGVLEEIKRWGIPNYFGYQRFGNDGNNHEIGRKIAHGEQRVTSPKRRTFLLSAYQSKLFNEWLKERIKLSKILAEFTPSEASRLAPMIPVEQLKALQKQPHPFKILPGEILHHYPHGKIFVAEDMEEESRRFVEKDIVPAGLLSGTKAKSSEGIAHLYEAPFIDEKIQEQGSRRLAWIFPEDLEYRYIEEEAHGELNFYLPKGSYATVLIEELAHREIKID.

The active-site Nucleophile is the D76. Residues 151 to 318 (GIPNYFGYQR…EQGSRRLAWI (168 aa)) form the TRUD domain.

This sequence belongs to the pseudouridine synthase TruD family.

The catalysed reaction is uridine(13) in tRNA = pseudouridine(13) in tRNA. In terms of biological role, responsible for synthesis of pseudouridine from uracil-13 in transfer RNAs. This is tRNA pseudouridine synthase D from Wolinella succinogenes (strain ATCC 29543 / DSM 1740 / CCUG 13145 / JCM 31913 / LMG 7466 / NCTC 11488 / FDC 602W) (Vibrio succinogenes).